We begin with the raw amino-acid sequence, 226 residues long: Ribonuclease 3 (226 aa).

Residues 6–128 (INKLQRKLGY…LIGGVFLDSD (123 aa)) enclose the RNase III domain. Glutamate 41 contributes to the Mg(2+) binding site. Residue aspartate 45 is part of the active site. Residues aspartate 114 and glutamate 117 each coordinate Mg(2+). Glutamate 117 is an active-site residue. The region spanning 155-225 (DPKTRLQEYL…AEQALIKLGL (71 aa)) is the DRBM domain.

Belongs to the ribonuclease III family. Homodimer. Requires Mg(2+) as cofactor.

Its subcellular location is the cytoplasm. The catalysed reaction is Endonucleolytic cleavage to 5'-phosphomonoester.. Functionally, digests double-stranded RNA. Involved in the processing of primary rRNA transcript to yield the immediate precursors to the large and small rRNAs (23S and 16S). Processes some mRNAs, and tRNAs when they are encoded in the rRNA operon. Processes pre-crRNA and tracrRNA of type II CRISPR loci if present in the organism. This chain is Ribonuclease 3 (rnc), found in Pantoea ananatis (strain LMG 20103).